Reading from the N-terminus, the 196-residue chain is Imidazoleglycerol-phosphate dehydratase (196 aa).

It belongs to the imidazoleglycerol-phosphate dehydratase family.

It localises to the cytoplasm. The catalysed reaction is D-erythro-1-(imidazol-4-yl)glycerol 3-phosphate = 3-(imidazol-4-yl)-2-oxopropyl phosphate + H2O. The protein operates within amino-acid biosynthesis; L-histidine biosynthesis; L-histidine from 5-phospho-alpha-D-ribose 1-diphosphate: step 6/9. This chain is Imidazoleglycerol-phosphate dehydratase, found in Clostridium botulinum (strain Okra / Type B1).